A 450-amino-acid chain; its full sequence is Glucose-6-phosphate isomerase (450 aa).

At threonine 39 the chain carries Phosphothreonine. Residue glutamate 291 is the Proton donor of the active site. Active-site residues include histidine 312 and lysine 426.

The protein belongs to the GPI family.

It localises to the cytoplasm. It catalyses the reaction alpha-D-glucose 6-phosphate = beta-D-fructose 6-phosphate. It functions in the pathway carbohydrate biosynthesis; gluconeogenesis. Its pathway is carbohydrate degradation; glycolysis; D-glyceraldehyde 3-phosphate and glycerone phosphate from D-glucose: step 2/4. Catalyzes the reversible isomerization of glucose-6-phosphate to fructose-6-phosphate. The chain is Glucose-6-phosphate isomerase from Bacillus cereus (strain G9842).